Consider the following 121-residue polypeptide: Protein PilH (121 aa).

The 117-residue stretch at 3–119 (RILIVDDSPT…TLLKTINAVL (117 aa)) folds into the Response regulatory domain. The residue at position 52 (aspartate 52) is a 4-aspartylphosphate.

Functionally, may be a part of a signal-transduction system that regulates twitching motility by controlling pilus function (extension and retraction). This chain is Protein PilH (pilH), found in Pseudomonas aeruginosa (strain ATCC 15692 / DSM 22644 / CIP 104116 / JCM 14847 / LMG 12228 / 1C / PRS 101 / PAO1).